A 348-amino-acid chain; its full sequence is Propane 2-monooxygenase, reductase component (348 aa).

The 2Fe-2S ferredoxin-type domain maps to 5-95 (HKINFDPVDI…DCTIELLNFD (91 aa)). Cys-39, Cys-44, Cys-47, and Cys-79 together coordinate [2Fe-2S] cluster. In terms of domain architecture, FAD-binding FR-type spans 105 to 206 (IQDVRTQVQA…TGPYGSFTLK (102 aa)).

Belongs to the bacterial ring-hydroxylating dioxygenase ferredoxin reductase family. The propane 2-monooxygenase multicomponent enzyme system is composed of an electron transfer component and a monooxygenase component interacting with the effector protein MimD. The electron transfer component is composed of a reductase (MimB), and the monooxygenase component is formed by a large subunit (MimA) and a small subunit (MimC). It depends on FAD as a cofactor. Requires [2Fe-2S] cluster as cofactor.

In terms of biological role, reductase component of the propane 2-monooxygenase multicomponent enzyme system which is involved in the degradation of propane via the O2-dependent hydroxylation of propane. Reductase catalyzes the transfer of electrons from NADH or NADPH to monooxygenase. The polypeptide is Propane 2-monooxygenase, reductase component (Mycolicibacterium smegmatis (strain ATCC 700084 / mc(2)155) (Mycobacterium smegmatis)).